A 215-amino-acid chain; its full sequence is Ribonuclease T (215 aa).

In terms of domain architecture, Exonuclease spans 20-194; that stretch reads VVIDVETAGF…YDTEQTAQLF (175 aa). Asp23, Glu25, His181, and Asp186 together coordinate Mg(2+). His181 functions as the Proton donor/acceptor in the catalytic mechanism.

It belongs to the RNase T family. As to quaternary structure, homodimer. Mg(2+) is required as a cofactor.

Functionally, trims short 3' overhangs of a variety of RNA species, leaving a one or two nucleotide 3' overhang. Responsible for the end-turnover of tRNA: specifically removes the terminal AMP residue from uncharged tRNA (tRNA-C-C-A). Also appears to be involved in tRNA biosynthesis. The sequence is that of Ribonuclease T from Klebsiella pneumoniae subsp. pneumoniae (strain ATCC 700721 / MGH 78578).